The following is a 347-amino-acid chain: Putative ORC1-type DNA replication protein 1 (347 aa).

ATP-binding positions include 34–38 (TGKTV), Tyr167, and Arg179.

It belongs to the CDC6/cdc18 family.

Functionally, involved in regulation of DNA replication. Has no effect on MCM helicase activity, either stimulatory or inhibitory. Does not bind DNA. The protein is Putative ORC1-type DNA replication protein 1 (cdc6-1) of Thermoplasma acidophilum (strain ATCC 25905 / DSM 1728 / JCM 9062 / NBRC 15155 / AMRC-C165).